The following is a 24-amino-acid chain: Humanin-like 7 (24 aa).

Belongs to the humanin family. In terms of tissue distribution, expressed in testis.

Its subcellular location is the secreted. The protein resides in the cytoplasm. Functionally, plays a role as a neuroprotective and antiapoptotic factor. This is Humanin-like 7 from Homo sapiens (Human).